Consider the following 78-residue polypeptide: Acyl carrier protein (78 aa).

The Carrier domain occupies 1–76; sequence MALFEDIQAV…DVVKYIEDNK (76 aa). Serine 36 is modified (O-(pantetheine 4'-phosphoryl)serine).

This sequence belongs to the acyl carrier protein (ACP) family. In terms of processing, 4'-phosphopantetheine is transferred from CoA to a specific serine of apo-ACP by AcpS. This modification is essential for activity because fatty acids are bound in thioester linkage to the sulfhydryl of the prosthetic group.

Its subcellular location is the cytoplasm. Its pathway is lipid metabolism; fatty acid biosynthesis. Carrier of the growing fatty acid chain in fatty acid biosynthesis. In Helicobacter pylori (strain ATCC 700392 / 26695) (Campylobacter pylori), this protein is Acyl carrier protein.